We begin with the raw amino-acid sequence, 575 residues long: Carboxylesterase 5A (575 aa).

Positions 1–28 (MSGDWVRPGQALIWVIWIFGAIIEGSVT) are cleaved as a signal peptide. Cysteines 94 and 121 form a disulfide. N-linked (GlcNAc...) asparagine glycosylation occurs at N134. Residue S226 is the Acyl-ester intermediate of the active site. Residues C280 and C291 are joined by a disulfide bond. A glycan (N-linked (GlcNAc...) asparagine) is linked at N281. The active-site Charge relay system is E345. A glycan (N-linked (GlcNAc...) asparagine) is linked at N363. The active-site Charge relay system is H454. N-linked (GlcNAc...) asparagine glycosylation is present at N524.

This sequence belongs to the type-B carboxylesterase/lipase family. In terms of processing, N-glycosylated.

The protein localises to the secreted. The enzyme catalyses a carboxylic ester + H2O = an alcohol + a carboxylate + H(+). Involved in the detoxification of xenobiotics and in the activation of ester and amide prodrugs. The protein is Carboxylesterase 5A (Ces5a) of Mus musculus (Mouse).